We begin with the raw amino-acid sequence, 339 residues long: Extracellular matrix protein-binding protein emp (339 aa).

An N-terminal signal peptide occupies residues 1–26 (MKKKLFVLTMSTLFATQLINSNHANA).

The protein resides in the cell surface. Functionally, adhesin that binds to the host cell extracellular matrix proteins fibronectin, fibrinogen, collagen, and vitronectin. In Staphylococcus aureus (strain bovine RF122 / ET3-1), this protein is Extracellular matrix protein-binding protein emp (emp).